The sequence spans 281 residues: Microtubule-associated protein RP/EB family member 3 (281 aa).

Residues 14-116 (NLSRHDMLAW…FIQWFKKFFD (103 aa)) enclose the Calponin-homology (CH) domain. Disordered stretches follow at residues 157–181 (VPQR…VAPP) and 260–281 (EGFA…QDEY). Residues 158–175 (PQRTSPTGPKNMQTSGRL) are compositionally biased toward polar residues. Phosphoserine is present on residues Ser162 and Ser176. In terms of domain architecture, EB1 C-terminal spans 194 to 264 (GGHEADAQIL…LYATEEGFAP (71 aa)). Residues 217-260 (DGLEKERDFYFSKLRDIELICQEHESENSPVISGIIGILYATEE) are APC-binding. The segment at 217–281 (DGLEKERDFY…EHQQEDQDEY (65 aa)) is DCTN1-binding. Residues 272–281 (EHQQEDQDEY) show a composition bias toward basic and acidic residues.

This sequence belongs to the MAPRE family. In terms of assembly, homodimer. Heterodimer with MAPRE1. Binds monomeric and polymerized GTP-bound tubulin. Interacts with DCTN1 and SRCIN1. Binds to the C-terminal domain of APC. Interacts (via C-terminus) with CLIP1. Interacts with SLAIN2. Interacts with SLAIN1. Interacts with APC2. Interacts with AKAP9. Interacts with PDE4DIP isoform 2/MMG8/SMYLE; this interaction is required for its recruitment to the Golgi apparatus.

The protein resides in the cytoplasm. It localises to the cytoskeleton. Plus-end tracking protein (+TIP) that binds to the plus-end of microtubules and regulates the dynamics of the microtubule cytoskeleton. Promotes microtubule growth. May be involved in spindle function by stabilizing microtubules and anchoring them at centrosomes. Also acts as a regulator of minus-end microtubule organization: interacts with the complex formed by AKAP9 and PDE4DIP, leading to recruit CAMSAP2 to the Golgi apparatus, thereby tethering non-centrosomal minus-end microtubules to the Golgi, an important step for polarized cell movement. Promotes elongation of CAMSAP2-decorated microtubule stretches on the minus-end of microtubules. The chain is Microtubule-associated protein RP/EB family member 3 (Mapre3) from Mus musculus (Mouse).